The primary structure comprises 616 residues: Chaperone protein DnaK (616 aa).

Threonine 174 carries the post-translational modification Phosphothreonine; by autocatalysis. The segment at 575-616 (QQTQGAQSDPGAAGFGGQQEAPGAGQDENVVDADYKVVDDDK) is disordered. The span at 607–616 (ADYKVVDDDK) shows a compositional bias: basic and acidic residues.

Belongs to the heat shock protein 70 family.

Its function is as follows. Acts as a chaperone. The polypeptide is Chaperone protein DnaK (Ruminiclostridium cellulolyticum (strain ATCC 35319 / DSM 5812 / JCM 6584 / H10) (Clostridium cellulolyticum)).